The chain runs to 654 residues: Translation factor GUF1, mitochondrial (654 aa).

The region spanning 57–237 (ENYRNFSIVA…SVIKNIPSPV (181 aa)) is the tr-type G domain. Residues 66–73 (AHVDHGKS), 130–134 (DTPGH), and 184–187 (NKID) contribute to the GTP site.

It belongs to the TRAFAC class translation factor GTPase superfamily. Classic translation factor GTPase family. LepA subfamily.

It is found in the mitochondrion inner membrane. It catalyses the reaction GTP + H2O = GDP + phosphate + H(+). In terms of biological role, promotes mitochondrial protein synthesis. May act as a fidelity factor of the translation reaction, by catalyzing a one-codon backward translocation of tRNAs on improperly translocated ribosomes. Binds to mitochondrial ribosomes in a GTP-dependent manner. This chain is Translation factor GUF1, mitochondrial, found in Candida albicans (strain WO-1) (Yeast).